Consider the following 335-residue polypeptide: Glyceraldehyde-3-phosphate dehydrogenase (335 aa).

NAD(+) is bound by residues 11–12 (RI), Asp-33, and Lys-78. Residues 148 to 150 (SST), Thr-179, 208 to 209 (TG), and Arg-231 each bind D-glyceraldehyde 3-phosphate. Asn-313 provides a ligand contact to NAD(+).

It belongs to the glyceraldehyde-3-phosphate dehydrogenase family. Homotetramer.

The protein localises to the cytoplasm. It carries out the reaction D-glyceraldehyde 3-phosphate + phosphate + NAD(+) = (2R)-3-phospho-glyceroyl phosphate + NADH + H(+). It functions in the pathway carbohydrate degradation; glycolysis; pyruvate from D-glyceraldehyde 3-phosphate: step 1/5. The protein is Glyceraldehyde-3-phosphate dehydrogenase (GPD) of Pleurotus sajor-caju (Oyster mushroom).